We begin with the raw amino-acid sequence, 262 residues long: Indole-3-glycerol phosphate synthase (262 aa).

This sequence belongs to the TrpC family.

The enzyme catalyses 1-(2-carboxyphenylamino)-1-deoxy-D-ribulose 5-phosphate + H(+) = (1S,2R)-1-C-(indol-3-yl)glycerol 3-phosphate + CO2 + H2O. The protein operates within amino-acid biosynthesis; L-tryptophan biosynthesis; L-tryptophan from chorismate: step 4/5. The polypeptide is Indole-3-glycerol phosphate synthase (Nitratiruptor sp. (strain SB155-2)).